The primary structure comprises 125 residues: Oxytocin-neurophysin 1 (125 aa).

Positions 1–19 (MAGPSLACCLLGLLALTSA) are cleaved as a signal peptide. A disulfide bond links Cys20 and Cys25. A Glycine amide modification is found at Gly28. 7 disulfide bridges follow: Cys41-Cys85, Cys44-Cys58, Cys52-Cys75, Cys59-Cys65, Cys92-Cys104, Cys98-Cys116, and Cys105-Cys110.

This sequence belongs to the vasopressin/oxytocin family. As to quaternary structure, interacts with oxytocin receptor (Ki=1.5 nM). Interacts with vasopressin V1aR/AVPR1A (Ki=37 nM), V1bR/AVPR1B (Ki=222 nM) and V2R/AVPR2 receptors (Ki=823 nM).

The protein resides in the secreted. Functionally, neurophysin 1 specifically binds oxytocin. Oxytocin causes contraction of the smooth muscle of the uterus and of the mammary gland. Acts by binding to oxytocin receptor (OXTR). The protein is Oxytocin-neurophysin 1 (OXT) of Homo sapiens (Human).